A 303-amino-acid polypeptide reads, in one-letter code: Serine/threonine-protein phosphatase 6 catalytic subunit (303 aa).

Mn(2+) contacts are provided by Asp51, His53, Asp79, and Asn111. His112 serves as the catalytic Proton donor. Positions 161 and 235 each coordinate Mn(2+).

Belongs to the PPP phosphatase family. PP-6 (PP-V) subfamily. It depends on Mn(2+) as a cofactor.

The protein localises to the cytoplasm. The enzyme catalyses O-phospho-L-seryl-[protein] + H2O = L-seryl-[protein] + phosphate. The catalysed reaction is O-phospho-L-threonyl-[protein] + H2O = L-threonyl-[protein] + phosphate. Functionally, may be involved in controlling cellularization or in regulating transcription of the genes involved in this process. The protein is Serine/threonine-protein phosphatase 6 catalytic subunit (PpV) of Drosophila melanogaster (Fruit fly).